The chain runs to 393 residues: Chorismate synthase (393 aa).

The NADP(+) site is built by arginine 40 and arginine 46. Residues 129-131 (RAS), 250-251 (QA), glycine 301, 316-320 (KPIST), and arginine 342 contribute to the FMN site.

Belongs to the chorismate synthase family. Homotetramer. Requires FMNH2 as cofactor.

The catalysed reaction is 5-O-(1-carboxyvinyl)-3-phosphoshikimate = chorismate + phosphate. It participates in metabolic intermediate biosynthesis; chorismate biosynthesis; chorismate from D-erythrose 4-phosphate and phosphoenolpyruvate: step 7/7. Its function is as follows. Catalyzes the anti-1,4-elimination of the C-3 phosphate and the C-6 proR hydrogen from 5-enolpyruvylshikimate-3-phosphate (EPSP) to yield chorismate, which is the branch point compound that serves as the starting substrate for the three terminal pathways of aromatic amino acid biosynthesis. This reaction introduces a second double bond into the aromatic ring system. The chain is Chorismate synthase from Acidobacterium capsulatum (strain ATCC 51196 / DSM 11244 / BCRC 80197 / JCM 7670 / NBRC 15755 / NCIMB 13165 / 161).